A 299-amino-acid chain; its full sequence is Nucleophosmin (299 aa).

Positions 125-134 (ESSDDEDEEH) are enriched in acidic residues. The disordered stretch occupies residues 125–247 (ESSDDEDEEH…TPKTPLSSEE (123 aa)). The Nuclear localization signal motif lies at 153-158 (PRKKTR). Positions 160-187 (EEEEEDSDEDDDDDEDDDDEDDDEEEEE) are enriched in acidic residues. Residues 188 to 197 (TPVKKTDSTK) are compositionally biased toward basic and acidic residues. The Nuclear localization signal signature appears at 189–195 (PVKKTDS). 4 repeats span residues 218–220 (KTP), 221–223 (KTP), 237–239 (KTP), and 240–242 (KTP). Positions 218 to 242 (KTPKTPEQKGKQDTKPQTPKTPKTP) are 4 X 3 AA repeats of K-T-P. Residues 221–231 (KTPEQKGKQDT) are compositionally biased toward basic and acidic residues. Low complexity predominate over residues 232 to 242 (KPQTPKTPKTP).

The protein belongs to the nucleoplasmin family. As to quaternary structure, decamer formed by two pentameric rings associated in a head-to-head fashion. Post-translationally, phosphorylated.

The protein resides in the cytoplasm. It is found in the nucleus. It localises to the nucleoplasm. Its subcellular location is the nucleolus. Its function is as follows. Acts as a chaperonin for the core histones H3, H2B and H4. Associated with nucleolar ribonucleoprotein structures and bind single-stranded nucleic acids. It may function in the assembly and/or transport of ribosome. May stimulate endonuclease activity on apurinic/apyrimidinic (AP) double-stranded DNA. May inhibit endonuclease activity on AP single-stranded RNA. This is Nucleophosmin (npm1) from Xenopus laevis (African clawed frog).